Reading from the N-terminus, the 279-residue chain is MALKHFNPTSPGQRGLVLIDRSELHKGRPEKKLVEGLTKSGGRGGNGRIAVRFRGGGAKRLYRLVDFKRRKQGVATVVRLEYDPNRTAFIALIKYQADGELAYILAPQRLKAGDEVVTADKVDVKPGNTSPLRTMPIGTIIHNVELKPAKGGQIARSAGAYAQLVGRDAGYAQIRLNSGELRMVLDTCLATVGAVSNPDHSNQNLGKAGRVRHMGRRPHVRGVAMNPVDHPHGGGEGRTSGGRNPVTPAGKPTKGAKTRVNKATDKFIIRSRHKAKKGR.

The segment at 222–264 is disordered; it reads GVAMNPVDHPHGGGEGRTSGGRNPVTPAGKPTKGAKTRVNKAT.

It belongs to the universal ribosomal protein uL2 family. As to quaternary structure, part of the 50S ribosomal subunit. Forms a bridge to the 30S subunit in the 70S ribosome.

Its function is as follows. One of the primary rRNA binding proteins. Required for association of the 30S and 50S subunits to form the 70S ribosome, for tRNA binding and peptide bond formation. It has been suggested to have peptidyltransferase activity; this is somewhat controversial. Makes several contacts with the 16S rRNA in the 70S ribosome. In Caulobacter sp. (strain K31), this protein is Large ribosomal subunit protein uL2.